Here is a 149-residue protein sequence, read N- to C-terminus: Cytochrome c-556 (149 aa).

The first 20 residues, 1–20 (MLRTVIVAGALVLTASAVMA), serve as a signal peptide directing secretion. Positions 32, 137, 140, and 141 each coordinate heme c.

As to quaternary structure, monomer. In terms of processing, binds 1 heme c group covalently per subunit.

In terms of biological role, low-spin monoheme cytochrome c. The protein is Cytochrome c-556 of Rhodopseudomonas palustris (strain ATCC BAA-98 / CGA009).